A 466-amino-acid chain; its full sequence is Fez family zinc finger protein 1 (466 aa).

Positions 34 to 49 (PLAFSIERIMSRTPEP) match the Engrailed homology 1 repressor motif. 6 C2H2-type zinc fingers span residues 261 to 283 (FTCEVCGKVFNAHYNLTRHMPVH), 289 to 311 (FVCKICGKGFRQASTLCRHKIIH), 317 to 339 (HKCNQCGKAFNRSSTLNTHTRIH), 345 to 367 (FVCEFCGKGFHQKGNYKNHKLTH), 373 to 395 (FKCNICNKAFHQIYNLTFHMHTH), and 401 to 424 (FTCPTCGKGFCRNFDLKKHVRKLH). The disordered stretch occupies residues 446-466 (LPNREQSHTIIQSPQLQKSVY). The segment covering 453–466 (HTIIQSPQLQKSVY) has biased composition (polar residues).

The protein belongs to the krueppel C2H2-type zinc-finger protein family.

It is found in the nucleus. In terms of biological role, transcription repressor. Involved in the development of the forebrain region. This is Fez family zinc finger protein 1 (fezf1) from Xenopus laevis (African clawed frog).